Consider the following 419-residue polypeptide: MSGAARAGPARLAALALLTCSLWPTRADNASQEYYTALINVTVQEPGRGTPLTFRIDRGRYGLDSPKAEVRGQVLAPLPIHGVADHLGCDPQTRFFVPPNIKQWIALLQRGNCTFKEKISRAAFHNAVAVVIYNNKSKEEPVTMTHPGTGDIIAVMITELRGKDILSYLEKNISVQMTIAVGTRMPPKNFSRGSLVFVSISFIVLMIISSAWLIFYFIQKIRYTNARDRNQRRLGDAAKKAISKLTTRTVKKGDKETDPDFDHCAVCIESYKQNDVVRVLPCKHVFHKSCVDPWLSEHCTCPMCKLNILKALGIVPNLPCTDNVAFDMERLTRTQAVNRRAALGDLAGDSSLGLEPLRTSGISPLPQDGELTPRTGEINIAVTKEWFIIASFGLLSALTLCYMIIRATASLNANEVEWF.

The first 27 residues, 1–27 (MSGAARAGPARLAALALLTCSLWPTRA), serve as a signal peptide directing secretion. The Extracellular segment spans residues 28-194 (DNASQEYYTA…MPPKNFSRGS (167 aa)). N-linked (GlcNAc...) asparagine glycans are attached at residues Asn-29, Asn-40, Asn-112, Asn-135, Asn-172, and Asn-189. Residues 105 to 176 (IALLQRGNCT…SYLEKNISVQ (72 aa)) form the PA domain. Residues 195-217 (LVFVSISFIVLMIISSAWLIFYF) form a helical membrane-spanning segment. Topologically, residues 218 to 419 (IQKIRYTNAR…SLNANEVEWF (202 aa)) are cytoplasmic. The RING-type zinc finger occupies 264-305 (CAVCIESYKQNDVVRVLPCKHVFHKSCVDPWLSEHCTCPMCK).

Expression is highest in liver, with lesser amounts in the lung, spleen, brain, heart, kidney and testis.

Its subcellular location is the membrane. It localises to the cytoplasm. The enzyme catalyses S-ubiquitinyl-[E2 ubiquitin-conjugating enzyme]-L-cysteine + [acceptor protein]-L-lysine = [E2 ubiquitin-conjugating enzyme]-L-cysteine + N(6)-ubiquitinyl-[acceptor protein]-L-lysine.. The protein operates within protein modification; protein ubiquitination. Acts as an E3 ubiquitin-protein ligase. May have a role during the programmed cell death of hematopoietic cells. The chain is E3 ubiquitin-protein ligase RNF130 from Mus musculus (Mouse).